Consider the following 556-residue polypeptide: Urocanate hydratase (556 aa).

Residues 52 to 53 (GG), Q130, 176 to 178 (GMG), E196, R201, 242 to 243 (NA), 263 to 267 (QTSAH), 273 to 274 (YL), and Y322 contribute to the NAD(+) site. C410 is a catalytic residue. Residue G492 participates in NAD(+) binding.

This sequence belongs to the urocanase family. The cofactor is NAD(+).

It is found in the cytoplasm. The enzyme catalyses 4-imidazolone-5-propanoate = trans-urocanate + H2O. It functions in the pathway amino-acid degradation; L-histidine degradation into L-glutamate; N-formimidoyl-L-glutamate from L-histidine: step 2/3. Catalyzes the conversion of urocanate to 4-imidazolone-5-propionate. This Shewanella piezotolerans (strain WP3 / JCM 13877) protein is Urocanate hydratase.